The chain runs to 112 residues: Large ribosomal subunit protein P1w (112 aa).

A disordered region spans residues 85-112 (AAAPAAEEKKKDEPAEESDGDLGFGLFD). Ser-102 is modified (phosphoserine).

The protein belongs to the eukaryotic ribosomal protein P1/P2 family. In terms of assembly, P1 and P2 exist as dimers at the large ribosomal subunit.

Functionally, plays an important role in the elongation step of protein synthesis. This chain is Large ribosomal subunit protein P1w (RPP1A), found in Arabidopsis thaliana (Mouse-ear cress).